A 582-amino-acid chain; its full sequence is ATP-dependent lipid A-core flippase (582 aa).

5 consecutive transmembrane segments (helical) span residues 16–36 (LWPT…ALIL), 63–83 (VLVW…ITSY), 153–173 (IIGL…ILIV), 253–273 (PIIQ…ASFP), and 275–295 (VMDN…IALM). Residues 28-310 (IVAGVALILN…LTNVNAQFQR (283 aa)) enclose the ABC transmembrane type-1 domain. Residues 342–578 (VEFRNVTFTY…RGVYAQLHKM (237 aa)) form the ABC transporter domain. 376–383 (GRSGSGKS) lines the ATP pocket.

Belongs to the ABC transporter superfamily. Lipid exporter (TC 3.A.1.106) family. Homodimer.

The protein resides in the cell inner membrane. It catalyses the reaction ATP + H2O + lipid A-core oligosaccharideSide 1 = ADP + phosphate + lipid A-core oligosaccharideSide 2.. Involved in lipopolysaccharide (LPS) biosynthesis. Translocates lipid A-core from the inner to the outer leaflet of the inner membrane. Transmembrane domains (TMD) form a pore in the inner membrane and the ATP-binding domain (NBD) is responsible for energy generation. The protein is ATP-dependent lipid A-core flippase of Shigella flexneri.